A 37-amino-acid polypeptide reads, in one-letter code: SCNTATCVTHRLAGLLSRSGGMVKSNFVPTDVGSEAF.

C2 and C7 form a disulfide bridge. F37 carries the post-translational modification Phenylalanine amide.

The protein belongs to the calcitonin family.

The protein localises to the secreted. In terms of biological role, CGRP1/CALCA is a peptide hormone that induces vasodilation mediated by the CALCRL-RAMP1 receptor complex. Dilates a variety of vessels including the coronary, cerebral and systemic vasculature. Its abundance in the CNS also points toward a neurotransmitter or neuromodulator role. It also elevates platelet cAMP. CGRP1 can also bind and activate CALCR-RAMP1 (AMYR1) receptor complex. The chain is Calcitonin gene-related peptide 1 (CALCA) from Sus scrofa (Pig).